The sequence spans 499 residues: Lysine--tRNA ligase (499 aa).

Mg(2+) contacts are provided by Glu408 and Glu415.

This sequence belongs to the class-II aminoacyl-tRNA synthetase family. As to quaternary structure, homodimer. It depends on Mg(2+) as a cofactor.

The protein localises to the cytoplasm. The enzyme catalyses tRNA(Lys) + L-lysine + ATP = L-lysyl-tRNA(Lys) + AMP + diphosphate. This chain is Lysine--tRNA ligase, found in Bacillus cereus (strain B4264).